A 238-amino-acid polypeptide reads, in one-letter code: Uridylate kinase (238 aa).

12 to 15 contributes to the ATP binding site; it reads KLSG. The interval 20–25 is involved in allosteric activation by GTP; sequence GEKGFG. Gly54 serves as a coordination point for UMP. Gly55 and Arg59 together coordinate ATP. UMP-binding positions include Asp72 and 133–140; that span reads TGNPYFST. ATP is bound by residues Tyr166 and Asp169.

It belongs to the UMP kinase family. As to quaternary structure, homohexamer.

It localises to the cytoplasm. It catalyses the reaction UMP + ATP = UDP + ADP. Its pathway is pyrimidine metabolism; CTP biosynthesis via de novo pathway; UDP from UMP (UMPK route): step 1/1. With respect to regulation, allosterically activated by GTP. Inhibited by UTP. Functionally, catalyzes the reversible phosphorylation of UMP to UDP. This is Uridylate kinase from Clostridium botulinum (strain Hall / ATCC 3502 / NCTC 13319 / Type A).